The sequence spans 302 residues: MSWIERILNKSNITQTRKASIPEGVWTKCDSCGQVLYRAELERNLEVCPKCDHHMRMTARMRLHTLLDEGSEVELGSELEPKDVLKFKDSKKYKDRLVAAQKATGEKDALVVMKGTLYGMPIVAASFEFAFIGGSMSSVVGARFVRAVEQALEDNCPLVCFSASGGARMQEALMSLMQMAKTSAALAKLQERGLPYISVLTDPTMGGVSASLAMLGDINIAEPKALIGFAGPRVIEQTVREKLPPGFQRSEFLIEKGAIDMIVRRPEMRQTLASILSKLTNQPQPHFDEAAPVSEQENQADA.

In terms of domain architecture, CoA carboxyltransferase N-terminal spans 25–294 (VWTKCDSCGQ…PHFDEAAPVS (270 aa)). Residues Cys29, Cys32, Cys48, and Cys51 each contribute to the Zn(2+) site. Residues 29–51 (CDSCGQVLYRAELERNLEVCPKC) form a C4-type zinc finger. The tract at residues 281 to 302 (NQPQPHFDEAAPVSEQENQADA) is disordered.

This sequence belongs to the AccD/PCCB family. In terms of assembly, acetyl-CoA carboxylase is a heterohexamer composed of biotin carboxyl carrier protein (AccB), biotin carboxylase (AccC) and two subunits each of ACCase subunit alpha (AccA) and ACCase subunit beta (AccD). Requires Zn(2+) as cofactor.

It localises to the cytoplasm. It carries out the reaction N(6)-carboxybiotinyl-L-lysyl-[protein] + acetyl-CoA = N(6)-biotinyl-L-lysyl-[protein] + malonyl-CoA. It functions in the pathway lipid metabolism; malonyl-CoA biosynthesis; malonyl-CoA from acetyl-CoA: step 1/1. Functionally, component of the acetyl coenzyme A carboxylase (ACC) complex. Biotin carboxylase (BC) catalyzes the carboxylation of biotin on its carrier protein (BCCP) and then the CO(2) group is transferred by the transcarboxylase to acetyl-CoA to form malonyl-CoA. The chain is Acetyl-coenzyme A carboxylase carboxyl transferase subunit beta from Serratia proteamaculans (strain 568).